A 262-amino-acid chain; its full sequence is tRNA pseudouridine synthase A (262 aa).

Catalysis depends on D52, which acts as the Nucleophile. Y110 is a binding site for substrate.

This sequence belongs to the tRNA pseudouridine synthase TruA family. As to quaternary structure, homodimer.

It carries out the reaction uridine(38/39/40) in tRNA = pseudouridine(38/39/40) in tRNA. In terms of biological role, formation of pseudouridine at positions 38, 39 and 40 in the anticodon stem and loop of transfer RNAs. In Chromobacterium violaceum (strain ATCC 12472 / DSM 30191 / JCM 1249 / CCUG 213 / NBRC 12614 / NCIMB 9131 / NCTC 9757 / MK), this protein is tRNA pseudouridine synthase A.